Here is a 193-residue protein sequence, read N- to C-terminus: 3-isopropylmalate dehydratase small subunit (193 aa).

It belongs to the LeuD family. LeuD type 1 subfamily. In terms of assembly, heterodimer of LeuC and LeuD.

The enzyme catalyses (2R,3S)-3-isopropylmalate = (2S)-2-isopropylmalate. It participates in amino-acid biosynthesis; L-leucine biosynthesis; L-leucine from 3-methyl-2-oxobutanoate: step 2/4. Catalyzes the isomerization between 2-isopropylmalate and 3-isopropylmalate, via the formation of 2-isopropylmaleate. This is 3-isopropylmalate dehydratase small subunit from Bacillus cereus (strain 03BB102).